The primary structure comprises 258 residues: MGVEKIKAAFENGKKAFIPYVMGGDGGLEKLKERIRFLDEAGASIVEIGIPFSDPVADGPTIQRAGKRALDSGVTVKGIFQALIEVRKEVQIPFVLMTYLNPVLAFGKERFVEKCLEAGVDGIIVPDLPYEEQNIIAPLLREANIALIPLVTVTSPIERIEKITSESEGFVYAVTVAGVTGVRQNFKEEIHSYLEKVKLHVNLPVVAGFGISTKEHVEEMVTICDGVVVGSKIIELLENEKREEICELIYATKQKEEA.

Catalysis depends on proton acceptor residues Glu47 and Asp58.

This sequence belongs to the TrpA family. In terms of assembly, tetramer of two alpha and two beta chains.

It catalyses the reaction (1S,2R)-1-C-(indol-3-yl)glycerol 3-phosphate + L-serine = D-glyceraldehyde 3-phosphate + L-tryptophan + H2O. It participates in amino-acid biosynthesis; L-tryptophan biosynthesis; L-tryptophan from chorismate: step 5/5. Functionally, the alpha subunit is responsible for the aldol cleavage of indoleglycerol phosphate to indole and glyceraldehyde 3-phosphate. The protein is Tryptophan synthase alpha chain of Bacillus cereus (strain G9842).